The primary structure comprises 350 residues: Methylthioribose-1-phosphate isomerase (350 aa).

Residues 48–50, Arg93, and Gln198 each bind substrate; that span reads RGA. Asp239 (proton donor) is an active-site residue. 249–250 serves as a coordination point for substrate; it reads NK.

The protein belongs to the eIF-2B alpha/beta/delta subunits family. MtnA subfamily.

The enzyme catalyses 5-(methylsulfanyl)-alpha-D-ribose 1-phosphate = 5-(methylsulfanyl)-D-ribulose 1-phosphate. It participates in amino-acid biosynthesis; L-methionine biosynthesis via salvage pathway; L-methionine from S-methyl-5-thio-alpha-D-ribose 1-phosphate: step 1/6. Functionally, catalyzes the interconversion of methylthioribose-1-phosphate (MTR-1-P) into methylthioribulose-1-phosphate (MTRu-1-P). In Fervidobacterium nodosum (strain ATCC 35602 / DSM 5306 / Rt17-B1), this protein is Methylthioribose-1-phosphate isomerase.